The sequence spans 189 residues: Crossover junction endodeoxyribonuclease RuvC (189 aa).

Catalysis depends on residues Asp12, Glu72, and Asp147. Residues Asp12, Glu72, and Asp147 each contribute to the Mg(2+) site.

This sequence belongs to the RuvC family. Homodimer which binds Holliday junction (HJ) DNA. The HJ becomes 2-fold symmetrical on binding to RuvC with unstacked arms; it has a different conformation from HJ DNA in complex with RuvA. In the full resolvosome a probable DNA-RuvA(4)-RuvB(12)-RuvC(2) complex forms which resolves the HJ. Mg(2+) is required as a cofactor.

The protein resides in the cytoplasm. The enzyme catalyses Endonucleolytic cleavage at a junction such as a reciprocal single-stranded crossover between two homologous DNA duplexes (Holliday junction).. The RuvA-RuvB-RuvC complex processes Holliday junction (HJ) DNA during genetic recombination and DNA repair. Endonuclease that resolves HJ intermediates. Cleaves cruciform DNA by making single-stranded nicks across the HJ at symmetrical positions within the homologous arms, yielding a 5'-phosphate and a 3'-hydroxyl group; requires a central core of homology in the junction. The consensus cleavage sequence is 5'-(A/T)TT(C/G)-3'. Cleavage occurs on the 3'-side of the TT dinucleotide at the point of strand exchange. HJ branch migration catalyzed by RuvA-RuvB allows RuvC to scan DNA until it finds its consensus sequence, where it cleaves and resolves the cruciform DNA. The polypeptide is Crossover junction endodeoxyribonuclease RuvC (Porphyromonas gingivalis (strain ATCC BAA-308 / W83)).